Here is a 242-residue protein sequence, read N- to C-terminus: 1-(5-phosphoribosyl)-5-[(5-phosphoribosylamino)methylideneamino] imidazole-4-carboxamide isomerase (242 aa).

The Proton acceptor role is filled by D10. The active-site Proton donor is the D131.

Belongs to the HisA/HisF family.

It is found in the cytoplasm. It catalyses the reaction 1-(5-phospho-beta-D-ribosyl)-5-[(5-phospho-beta-D-ribosylamino)methylideneamino]imidazole-4-carboxamide = 5-[(5-phospho-1-deoxy-D-ribulos-1-ylimino)methylamino]-1-(5-phospho-beta-D-ribosyl)imidazole-4-carboxamide. Its pathway is amino-acid biosynthesis; L-histidine biosynthesis; L-histidine from 5-phospho-alpha-D-ribose 1-diphosphate: step 4/9. The protein is 1-(5-phosphoribosyl)-5-[(5-phosphoribosylamino)methylideneamino] imidazole-4-carboxamide isomerase of Granulibacter bethesdensis (strain ATCC BAA-1260 / CGDNIH1).